Consider the following 243-residue polypeptide: 1-(5-phosphoribosyl)-5-[(5-phosphoribosylamino)methylideneamino] imidazole-4-carboxamide isomerase (243 aa).

Residue D8 is the Proton acceptor of the active site. The active-site Proton donor is D130.

The protein belongs to the HisA/HisF family.

The protein resides in the cytoplasm. It catalyses the reaction 1-(5-phospho-beta-D-ribosyl)-5-[(5-phospho-beta-D-ribosylamino)methylideneamino]imidazole-4-carboxamide = 5-[(5-phospho-1-deoxy-D-ribulos-1-ylimino)methylamino]-1-(5-phospho-beta-D-ribosyl)imidazole-4-carboxamide. Its pathway is amino-acid biosynthesis; L-histidine biosynthesis; L-histidine from 5-phospho-alpha-D-ribose 1-diphosphate: step 4/9. This chain is 1-(5-phosphoribosyl)-5-[(5-phosphoribosylamino)methylideneamino] imidazole-4-carboxamide isomerase, found in Acinetobacter baylyi (strain ATCC 33305 / BD413 / ADP1).